Reading from the N-terminus, the 146-residue chain is Hemoglobin subunit beta-1/2 (146 aa).

Residues 2 to 146 (EWTDKERSII…VVSALGKQYH (145 aa)) form the Globin domain. Heme b is bound by residues histidine 63 and histidine 92.

It belongs to the globin family. Hb1 is a heterotetramer of two alpha-1 chains and two beta chains. Hb2 is a heterotetramer of two alpha-2 chains and two beta chains. Red blood cells.

Involved in oxygen transport from gills to the various peripheral tissues. This is Hemoglobin subunit beta-1/2 from Trematomus newnesi (Dusky notothen).